A 739-amino-acid polypeptide reads, in one-letter code: Elongation factor 2 (739 aa).

The 243-residue stretch at 19-261 (RNIRNIGIIA…MVALHVPDPI (243 aa)) folds into the tr-type G domain. GTP contacts are provided by residues 28–35 (AHVDHGKT), 94–98 (DTPGH), and 148–151 (NKID). Histidine 603 bears the Diphthamide mark.

It belongs to the TRAFAC class translation factor GTPase superfamily. Classic translation factor GTPase family. EF-G/EF-2 subfamily.

It localises to the cytoplasm. Catalyzes the GTP-dependent ribosomal translocation step during translation elongation. During this step, the ribosome changes from the pre-translocational (PRE) to the post-translocational (POST) state as the newly formed A-site-bound peptidyl-tRNA and P-site-bound deacylated tRNA move to the P and E sites, respectively. Catalyzes the coordinated movement of the two tRNA molecules, the mRNA and conformational changes in the ribosome. The sequence is that of Elongation factor 2 from Korarchaeum cryptofilum (strain OPF8).